Here is a 139-residue protein sequence, read N- to C-terminus: uncharacterized protein (139 aa).

This sequence to M.tuberculosis Rv2798c.

This is an uncharacterized protein from Mycobacterium tuberculosis (strain CDC 1551 / Oshkosh).